A 110-amino-acid chain; its full sequence is HIT-like protein CPn_0488/CP_0266/CPj0488/CpB0508 (110 aa).

The 108-residue stretch at 3 to 110 (VFKQIIDGLI…LGGRPLGAIA (108 aa)) folds into the HIT domain. Positions 95–99 (HLHIH) match the Histidine triad motif motif.

This is HIT-like protein CPn_0488/CP_0266/CPj0488/CpB0508 from Chlamydia pneumoniae (Chlamydophila pneumoniae).